The chain runs to 325 residues: MEERAAILLLAHGTPDSAEEIPEYLRNVVSGRPMPAEVIEEVRHRFVEIGGSPLTALTLQQGRLLQEALGLPVYVGMRNWKPYIADVVKQMVEDGITRAVAICLAPQNSRTSVGLYRRAVFAEAGQKMQIGFIEGWAEDDLLAAAFADRLRATWEPFRAEVGGPVPVLFTAHSVPCRTVQAPQPDPEAPRRPVLPPDPYNYEAKKTAMHVAAKVDGLDAWYFAFQSQGMSGGPWIGPTVEDTLTALHQEGIRHLVIQPVGFLCDHVEILYDIDIAFRDFAQNLGMMLRRPASLNDSPLLTAALARLAQSGLDRLQASEAPEPAAS.

Fe cation is bound by residues His172 and Glu267.

Belongs to the ferrochelatase family.

The protein resides in the cytoplasm. It carries out the reaction heme b + 2 H(+) = protoporphyrin IX + Fe(2+). Its pathway is porphyrin-containing compound metabolism; protoheme biosynthesis; protoheme from protoporphyrin-IX: step 1/1. In terms of biological role, catalyzes the ferrous insertion into protoporphyrin IX. This Acidobacterium capsulatum (strain ATCC 51196 / DSM 11244 / BCRC 80197 / JCM 7670 / NBRC 15755 / NCIMB 13165 / 161) protein is Ferrochelatase.